Here is a 151-residue protein sequence, read N- to C-terminus: Ribosome maturation factor RimP (151 aa).

It belongs to the RimP family.

It localises to the cytoplasm. Its function is as follows. Required for maturation of 30S ribosomal subunits. The protein is Ribosome maturation factor RimP of Vibrio atlanticus (strain LGP32) (Vibrio splendidus (strain Mel32)).